A 159-amino-acid polypeptide reads, in one-letter code: UPF0262 protein RD1_1069 (159 aa).

Belongs to the UPF0262 family.

In Roseobacter denitrificans (strain ATCC 33942 / OCh 114) (Erythrobacter sp. (strain OCh 114)), this protein is UPF0262 protein RD1_1069.